We begin with the raw amino-acid sequence, 153 residues long: Pro-corazonin (153 aa).

Residues 1–20 (MLRLLLLPLFLFTLSMACMG) form the signal peptide. Residue Q21 is modified to Pyrrolidone carboxylic acid. Residue N31 is modified to Asparagine amide. Residues 64–153 (LERCLLQLQH…AVEPNDYGKH (90 aa)) constitute a propeptide that is removed on maturation.

It belongs to the corazonin family. Expression is restricted to 24 neurons in the larval CNS (8 in the brain and 16 in the ventral nerve cord) and 12-16 neurons in the pars lateralis of the adult brain.

The protein localises to the secreted. Its function is as follows. Cardioactive peptide. Corazonin is probably involved in the physiological regulation of the heart beat. Clock (Clk) and cycle (cyc) proteins negatively regulate Crz transcription in a cell-specific manner. This is Pro-corazonin (Crz) from Drosophila virilis (Fruit fly).